Consider the following 459-residue polypeptide: Putrescine aminotransferase (459 aa).

Pyridoxal 5'-phosphate-binding positions include 150-151 and glutamine 274; that span reads GT. Position 300 is an N6-(pyridoxal phosphate)lysine (lysine 300). Threonine 332 is a pyridoxal 5'-phosphate binding site.

The protein belongs to the class-III pyridoxal-phosphate-dependent aminotransferase family. Putrescine aminotransferase subfamily. It depends on pyridoxal 5'-phosphate as a cofactor.

The enzyme catalyses an alkane-alpha,omega-diamine + 2-oxoglutarate = an omega-aminoaldehyde + L-glutamate. It carries out the reaction putrescine + 2-oxoglutarate = 1-pyrroline + L-glutamate + H2O. The catalysed reaction is cadaverine + 2-oxoglutarate = 5-aminopentanal + L-glutamate. It functions in the pathway amine and polyamine degradation; putrescine degradation; 4-aminobutanal from putrescine (transaminase route): step 1/1. Functionally, catalyzes the aminotransferase reaction from putrescine to 2-oxoglutarate, leading to glutamate and 4-aminobutanal, which spontaneously cyclizes to form 1-pyrroline. This is the first step in one of two pathways for putrescine degradation, where putrescine is converted into 4-aminobutanoate (gamma-aminobutyrate or GABA) via 4-aminobutanal. Also functions as a cadaverine transaminase in a a L-lysine degradation pathway to succinate that proceeds via cadaverine, glutarate and L-2-hydroxyglutarate. The chain is Putrescine aminotransferase from Salmonella paratyphi A (strain ATCC 9150 / SARB42).